The primary structure comprises 549 residues: Dihydroxy-acid dehydratase (549 aa).

Aspartate 78 contributes to the Mg(2+) binding site. Cysteine 119 contacts [2Fe-2S] cluster. Mg(2+) contacts are provided by aspartate 120 and lysine 121. Lysine 121 carries the post-translational modification N6-carboxylysine. Position 192 (cysteine 192) interacts with [2Fe-2S] cluster. Residue glutamate 439 participates in Mg(2+) binding. Serine 465 serves as the catalytic Proton acceptor.

The protein belongs to the IlvD/Edd family. In terms of assembly, homodimer. [2Fe-2S] cluster is required as a cofactor. It depends on Mg(2+) as a cofactor.

It catalyses the reaction (2R)-2,3-dihydroxy-3-methylbutanoate = 3-methyl-2-oxobutanoate + H2O. The catalysed reaction is (2R,3R)-2,3-dihydroxy-3-methylpentanoate = (S)-3-methyl-2-oxopentanoate + H2O. The protein operates within amino-acid biosynthesis; L-isoleucine biosynthesis; L-isoleucine from 2-oxobutanoate: step 3/4. Its pathway is amino-acid biosynthesis; L-valine biosynthesis; L-valine from pyruvate: step 3/4. Functionally, functions in the biosynthesis of branched-chain amino acids. Catalyzes the dehydration of (2R,3R)-2,3-dihydroxy-3-methylpentanoate (2,3-dihydroxy-3-methylvalerate) into 2-oxo-3-methylpentanoate (2-oxo-3-methylvalerate) and of (2R)-2,3-dihydroxy-3-methylbutanoate (2,3-dihydroxyisovalerate) into 2-oxo-3-methylbutanoate (2-oxoisovalerate), the penultimate precursor to L-isoleucine and L-valine, respectively. This Endomicrobium trichonymphae protein is Dihydroxy-acid dehydratase.